A 779-amino-acid polypeptide reads, in one-letter code: Pleckstrin homology domain-containing family A member 4 (779 aa).

The 100-residue stretch at 54–153 folds into the PH domain; it reads PVHIRGWLHK…WLRALGKASR (100 aa). Disordered stretches follow at residues 152 to 355, 495 to 669, and 694 to 766; these read SRAE…LPGP, AGLG…SGGH, and SPER…QEEG. At Ser164 the chain carries Phosphoserine. The segment covering 183-193 has biased composition (basic and acidic residues); it reads VNRREEGRTSE. Composition is skewed to low complexity over residues 246-259 and 324-334; these read PRPRSAPVRRPPLS and QSTQVSSGSST. Residues 517–527 show a composition bias toward basic and acidic residues; sequence QREESSERESL. Residues 528–540 show a composition bias toward low complexity; the sequence is SESLELSSPQSPE. Residue Ser562 is modified to Phosphoserine. The segment covering 567–580 has biased composition (polar residues); it reads RASSPECRQQSSPL. Low complexity-rich tracts occupy residues 608–627 and 649–659; these read GLSLPRPTSPRLLTLGRTLS and SSGSWSSPRHS. A compositionally biased stretch (polar residues) spans 720–740; it reads VTSSPTSHKANSATTGFSCQG.

It is found in the cytoplasm. The protein resides in the membrane. Functionally, binds specifically to phosphatidylinositol 3-phosphate (PtdIns3P), but not to other phosphoinositides. This chain is Pleckstrin homology domain-containing family A member 4 (Plekha4), found in Rattus norvegicus (Rat).